We begin with the raw amino-acid sequence, 419 residues long: Tryptophan synthase beta chain (419 aa).

K98 is subject to N6-(pyridoxal phosphate)lysine.

It belongs to the TrpB family. As to quaternary structure, tetramer of two alpha and two beta chains. Pyridoxal 5'-phosphate serves as cofactor.

The catalysed reaction is (1S,2R)-1-C-(indol-3-yl)glycerol 3-phosphate + L-serine = D-glyceraldehyde 3-phosphate + L-tryptophan + H2O. The protein operates within amino-acid biosynthesis; L-tryptophan biosynthesis; L-tryptophan from chorismate: step 5/5. In terms of biological role, the beta subunit is responsible for the synthesis of L-tryptophan from indole and L-serine. The protein is Tryptophan synthase beta chain of Ruegeria sp. (strain TM1040) (Silicibacter sp.).